A 371-amino-acid polypeptide reads, in one-letter code: MEVLTNQPTPNKTSGKSNNSAFFYFESCQPPFLAILLLLIAYTVILIMGIFGNLSLIIIIFKKQREAQNVTNILIANLSLSDILVCVMCIPFTVIYTLMDHWVFGNTMCKLTSYVQSVSVSVSIFSLVLIAIERYQLIVNPRGWKPRVAHAYWGIILIWLISLTLSIPLFLSYHLTNEPFHNLSLPTDIYTHQVACVEIWPSKLNQLLFSTSLFMLQYFVPLGFILICYLKIVLCLRKRTRQVDRRKENKSRLNENKRVNVMLISIVVTFGACWLPLNIFNVIFDWYHEMLMSCHHDLVFVVCHLIAMVSTCINPLFYGFLNKNFQKDLMMLIHHCWCGEPQESYENIAMSTMHTDESKGSLKLAHIPTGI.

Residues 1–31 (MEVLTNQPTPNKTSGKSNNSAFFYFESCQPP) lie on the Extracellular side of the membrane. N-linked (GlcNAc...) asparagine glycans are attached at residues Asn-11 and Asn-18. A helical membrane pass occupies residues 32–52 (FLAILLLLIAYTVILIMGIFG). Residues 53–82 (NLSLIIIIFKKQREAQNVTNILIANLSLSD) lie on the Cytoplasmic side of the membrane. Residues 83–103 (ILVCVMCIPFTVIYTLMDHWV) form a helical membrane-spanning segment. Over 104–111 (FGNTMCKL) the chain is Extracellular. Cys-109 and Cys-196 are disulfide-bonded. A helical transmembrane segment spans residues 112-132 (TSYVQSVSVSVSIFSLVLIAI). Residues 133 to 150 (ERYQLIVNPRGWKPRVAH) are Cytoplasmic-facing. The chain crosses the membrane as a helical span at residues 151–171 (AYWGIILIWLISLTLSIPLFL). Residues 172–206 (SYHLTNEPFHNLSLPTDIYTHQVACVEIWPSKLNQ) lie on the Extracellular side of the membrane. Asn-182 is a glycosylation site (N-linked (GlcNAc...) asparagine). A helical transmembrane segment spans residues 207–227 (LLFSTSLFMLQYFVPLGFILI). Residues 228 to 263 (CYLKIVLCLRKRTRQVDRRKENKSRLNENKRVNVML) lie on the Cytoplasmic side of the membrane. Residues 264–284 (ISIVVTFGACWLPLNIFNVIF) traverse the membrane as a helical segment. Over 285–297 (DWYHEMLMSCHHD) the chain is Extracellular. A helical transmembrane segment spans residues 298–318 (LVFVVCHLIAMVSTCINPLFY). The Cytoplasmic portion of the chain corresponds to 319 to 371 (GFLNKNFQKDLMMLIHHCWCGEPQESYENIAMSTMHTDESKGSLKLAHIPTGI). Residue Cys-336 is the site of S-palmitoyl cysteine attachment.

Belongs to the G-protein coupled receptor 1 family. Kidney and discrete regions of the hypothalamus including the suprachiasmatic nucleus, anterior hypothalamus, bed nucleus stria terminalis, and the ventromedial nucleus.

The protein localises to the cell membrane. Functionally, receptor for neuropeptide Y and peptide YY. The rank order of affinity of this receptor for pancreatic polypeptides is NPY = PYY &gt;= NPY (2-36) = [Leu-31, Pro-34] NPY &gt; NPY (13-36) &gt; PP. The activity of this receptor is mediated by G proteins that inhibits adenylate cyclase activity. The sequence is that of Neuropeptide Y receptor type 6 (Npy6r) from Mus musculus (Mouse).